Consider the following 170-residue polypeptide: MSNELKQVEQTEEAVVVSETKDYIKVYENGKYRRKAKYQQLNSMSHRELTDEEEINIFNLLNGAEGSAVEMKRAVGSKVTIVDFITVPYTKIDEDTGVEENGVLTYLINENGEAIATSSKAVYFTLNRLLIQCGKHADGTWKRPIVEIISVKQTNGDGMDLKLVGFDKKK.

The segment at 1–26 (MSNELKQVEQTEEAVVVSETKDYIKV) is oligomerization.

Belongs to the phi29likevirus single-strand-binding protein family. In terms of assembly, hexamer.

Functionally, single-stranded DNA-binding protein required for the elongation during viral DNA replication by strand displacement. Displaced viral DNA strands are transiently coated with the ssDNA-binding protein and therefore protected againt nucleases. The latter is then probably removed by the replisome that performs lagging strand synthesis or during the events that lead up to the recombination process. Has helix-destabilizing activity since it removes secondary structure from the ssDNA in replicative intermediates. In Bacillus subtilis (Bacteriophage GA-1), this protein is Single-stranded DNA-binding protein.